An 863-amino-acid chain; its full sequence is Oleate activated transcription factor 3 (863 aa).

The zn(2)-C6 fungal-type DNA-binding region spans 19–47 (CTNCKKRKSKCDRTKPCGTCVRLGDVDSC). Residues 52–63 (DSSGQPESSPSL) show a composition bias toward polar residues. The disordered stretch occupies residues 52–99 (DSSGQPESSPSLNDADPLRKQSTPAERISPGFIKKRRSSQTRQDEDHW).

This sequence belongs to the OAF3 family.

The protein localises to the cytoplasm. Its subcellular location is the nucleus. It localises to the mitochondrion. Functionally, transcriptional inhibitor with a significantly increased number of target genes in response to oleate. The protein is Oleate activated transcription factor 3 (OAF3) of Saccharomyces cerevisiae (strain YJM789) (Baker's yeast).